The chain runs to 182 residues: MSKQLKPVAPKQPIVLGKMGSTYGIRGWLRVFSSTENAESIFDYQPWLIQRSGQWQFVELEDWKRHSQDLIIKVKGIDDRDAANLLTNCEIVVDSEQLPPLEGDDYYWKDLMGCQVVTTSGYELGKVIDMMETGSNDVMVVRANLKDAFGMKERLVPFLHGQVIKKVDLTARVIEADWDPGF.

The 80-residue stretch at 103-182 folds into the PRC barrel domain; it reads GDDYYWKDLM…VIEADWDPGF (80 aa).

It belongs to the RimM family. In terms of assembly, binds ribosomal protein uS19.

The protein resides in the cytoplasm. Functionally, an accessory protein needed during the final step in the assembly of 30S ribosomal subunit, possibly for assembly of the head region. Essential for efficient processing of 16S rRNA. May be needed both before and after RbfA during the maturation of 16S rRNA. It has affinity for free ribosomal 30S subunits but not for 70S ribosomes. In Serratia proteamaculans (strain 568), this protein is Ribosome maturation factor RimM.